The sequence spans 685 residues: UvrABC system protein B (685 aa).

The 382-residue stretch at 39–420 (EGIGDGLMYQ…TYEAEHQGQV (382 aa)) folds into the Helicase ATP-binding domain. 52–59 (GVTGSGKT) provides a ligand contact to ATP. The short motif at 105 to 128 (YYDYYQPEAYVPSRDLFIEKDSSI) is the Beta-hairpin element. The Helicase C-terminal domain occupies 443-596 (QVDDLLSEAK…QIAFNQANGI (154 aa)). Positions 640–675 (AKSIRKLEKEMQEHARNLEFEKAAAARDELFRLRQR) constitute a UVR domain.

The protein belongs to the UvrB family. As to quaternary structure, forms a heterotetramer with UvrA during the search for lesions. Interacts with UvrC in an incision complex.

It localises to the cytoplasm. The UvrABC repair system catalyzes the recognition and processing of DNA lesions. A damage recognition complex composed of 2 UvrA and 2 UvrB subunits scans DNA for abnormalities. Upon binding of the UvrA(2)B(2) complex to a putative damaged site, the DNA wraps around one UvrB monomer. DNA wrap is dependent on ATP binding by UvrB and probably causes local melting of the DNA helix, facilitating insertion of UvrB beta-hairpin between the DNA strands. Then UvrB probes one DNA strand for the presence of a lesion. If a lesion is found the UvrA subunits dissociate and the UvrB-DNA preincision complex is formed. This complex is subsequently bound by UvrC and the second UvrB is released. If no lesion is found, the DNA wraps around the other UvrB subunit that will check the other stand for damage. The protein is UvrABC system protein B of Aromatoleum aromaticum (strain DSM 19018 / LMG 30748 / EbN1) (Azoarcus sp. (strain EbN1)).